The following is a 356-amino-acid chain: Phosphate acyltransferase (356 aa).

It belongs to the PlsX family. Homodimer. Probably interacts with PlsY.

The protein localises to the cytoplasm. It catalyses the reaction a fatty acyl-[ACP] + phosphate = an acyl phosphate + holo-[ACP]. It functions in the pathway lipid metabolism; phospholipid metabolism. In terms of biological role, catalyzes the reversible formation of acyl-phosphate (acyl-PO(4)) from acyl-[acyl-carrier-protein] (acyl-ACP). This enzyme utilizes acyl-ACP as fatty acyl donor, but not acyl-CoA. The chain is Phosphate acyltransferase from Escherichia coli (strain K12 / DH10B).